The sequence spans 403 residues: Serine/threonine transporter SstT (403 aa).

The next 8 membrane-spanning stretches (helical) occupy residues 11–31 (GNLV…AFIS), 51–71 (AIAP…KEVG), 81–101 (VMYV…SFIF), 138–158 (ALAN…GIPL), 175–195 (AVSY…FGLV), 213–233 (LLGV…PILV), 285–305 (VAIP…VTVL), and 319–339 (FMTA…ASGV).

It belongs to the dicarboxylate/amino acid:cation symporter (DAACS) (TC 2.A.23) family.

Its subcellular location is the cell inner membrane. The enzyme catalyses L-serine(in) + Na(+)(in) = L-serine(out) + Na(+)(out). It catalyses the reaction L-threonine(in) + Na(+)(in) = L-threonine(out) + Na(+)(out). In terms of biological role, involved in the import of serine and threonine into the cell, with the concomitant import of sodium (symport system). This is Serine/threonine transporter SstT from Haemophilus ducreyi (strain 35000HP / ATCC 700724).